A 230-amino-acid chain; its full sequence is Orotidine 5'-phosphate decarboxylase (230 aa).

Residues D11, K34, 61 to 70 (DLKLHDIPNT), T117, R179, Q188, G208, and R209 each bind substrate. K63 acts as the Proton donor in catalysis.

It belongs to the OMP decarboxylase family. Type 1 subfamily. In terms of assembly, homodimer.

The enzyme catalyses orotidine 5'-phosphate + H(+) = UMP + CO2. It participates in pyrimidine metabolism; UMP biosynthesis via de novo pathway; UMP from orotate: step 2/2. In terms of biological role, catalyzes the decarboxylation of orotidine 5'-monophosphate (OMP) to uridine 5'-monophosphate (UMP). The protein is Orotidine 5'-phosphate decarboxylase of Streptococcus pyogenes serotype M1.